A 358-amino-acid chain; its full sequence is Probable ABC transporter periplasmic-binding protein y4fP (358 aa).

A signal peptide spans 1–46; it reads MRNVIKLTWSRRKRSASLDKGENIMKLAFAFATAAIVVAAAFPALA.

Belongs to the bacterial solute-binding protein 1 family.

It is found in the periplasm. Its function is as follows. Probably part of the binding-protein-dependent transport system y4fNOP. The sequence is that of Probable ABC transporter periplasmic-binding protein y4fP from Sinorhizobium fredii (strain NBRC 101917 / NGR234).